A 362-amino-acid chain; its full sequence is 3-isopropylmalate dehydrogenase (362 aa).

78 to 91 (GYKWDSLPPHQRPE) lines the NAD(+) pocket. Residues R98, R108, R136, and D226 each contribute to the substrate site. Mg(2+)-binding residues include D226, D250, and D254. 284 to 296 (GSAPDIAGQDKAN) serves as a coordination point for NAD(+).

This sequence belongs to the isocitrate and isopropylmalate dehydrogenases family. LeuB type 1 subfamily. In terms of assembly, homodimer. Mg(2+) is required as a cofactor. The cofactor is Mn(2+).

The protein localises to the cytoplasm. The catalysed reaction is (2R,3S)-3-isopropylmalate + NAD(+) = 4-methyl-2-oxopentanoate + CO2 + NADH. It functions in the pathway amino-acid biosynthesis; L-leucine biosynthesis; L-leucine from 3-methyl-2-oxobutanoate: step 3/4. Functionally, catalyzes the oxidation of 3-carboxy-2-hydroxy-4-methylpentanoate (3-isopropylmalate) to 3-carboxy-4-methyl-2-oxopentanoate. The product decarboxylates to 4-methyl-2 oxopentanoate. This is 3-isopropylmalate dehydrogenase from Nostoc sp. (strain PCC 7120 / SAG 25.82 / UTEX 2576).